The sequence spans 498 residues: Interferon regulatory factor 5 (498 aa).

The residue at position 10 (T10) is a Phosphothreonine. A Nuclear localization signal motif is present at residues 12 to 18 (PRRVRLK). Positions 14–122 (RVRLKPWLVA…QPYKIYEVCS (109 aa)) form a DNA-binding region, IRF tryptophan pentad repeat. Residues 121-207 (CSNGPAPTDS…SPLAPPPGNP (87 aa)) form a disordered region. The Nuclear export signal signature appears at 150–160 (LQRMLPSLSLT). S158 bears the Phosphoserine; by TBK1 mark. A compositionally biased stretch (pro residues) spans 168–206 (TLQPPTLRPPTLQPPTLQPPVVLGPPAPDPSPLAPPPGN). S293 is subject to Phosphoserine; by TBK1. S301 bears the Phosphoserine mark. Glycyl lysine isopeptide (Lys-Gly) (interchain with G-Cter in ubiquitin) cross-links involve residues K411 and K412. 4 positions are modified to phosphoserine: S431, S435, S437, and S440. Phosphoserine; by IKKB is present on S446. The segment at 478 to 498 (PPGAGLGVGQGPWPMHPAGMQ) is disordered.

It belongs to the IRF family. As to quaternary structure, homodimer, when phosphorylated. Interacts with TASL (via pLxIS motif); interaction takes place downstream of TLR7, TLR8 or TLR9, leading to its activation. Interacts with MYD88 and TRAF6. Post-translationally, phosphorylation of serine and threonine residues by IKBKB in a C-terminal autoinhibitory region, stimulates dimerization, transport into the nucleus, assembly with the coactivator CBP/EP300 and initiation of transcription. In terms of processing, 'Lys-63'-linked polyubiquitination by TRAF6 is required for activation.

Its subcellular location is the cytoplasm. The protein localises to the nucleus. Its activity is regulated as follows. Maintained as a monomer in an autoinhibited state. Phosphorylation and activation follow the following steps: innate adapter protein TASL recruits IRF5, thereby licensing IRF5 for phosphorylation by IKBKB. Phosphorylated IRF5 dissociates from the adapter proteins, dimerizes, and then enters the nucleus to induce IFNs. (Microbial infection) Activated upon coronavirus SARS-CoV-2 infection. Transcription factor that plays a critical role in innate immunity by activating expression of type I interferon (IFN) IFNA and INFB and inflammatory cytokines downstream of endolysosomal toll-like receptors TLR7, TLR8 and TLR9. Regulates the transcription of type I IFN genes (IFN-alpha and IFN-beta) and IFN-stimulated genes (ISG) by binding to an interferon-stimulated response element (ISRE) in their promoters. Can efficiently activate both the IFN-beta (IFNB) and the IFN-alpha (IFNA) genes and mediate their induction downstream of the TLR-activated, MyD88-dependent pathway. Key transcription factor regulating the IFN response during SARS-CoV-2 infection. This Homo sapiens (Human) protein is Interferon regulatory factor 5.